The chain runs to 125 residues: Glycine cleavage system H protein (125 aa).

The Lipoyl-binding domain maps to 19-101 (EVTVGITDHA…YHEGWLVKLK (83 aa)). The residue at position 60 (K60) is an N6-lipoyllysine.

This sequence belongs to the GcvH family. In terms of assembly, the glycine cleavage system is composed of four proteins: P, T, L and H. (R)-lipoate is required as a cofactor.

Its function is as follows. The glycine cleavage system catalyzes the degradation of glycine. The H protein shuttles the methylamine group of glycine from the P protein to the T protein. The sequence is that of Glycine cleavage system H protein from Legionella pneumophila (strain Corby).